The sequence spans 250 residues: 5-oxoprolinase subunit A (250 aa).

The protein belongs to the LamB/PxpA family. As to quaternary structure, forms a complex composed of PxpA, PxpB and PxpC.

It carries out the reaction 5-oxo-L-proline + ATP + 2 H2O = L-glutamate + ADP + phosphate + H(+). Catalyzes the cleavage of 5-oxoproline to form L-glutamate coupled to the hydrolysis of ATP to ADP and inorganic phosphate. This is 5-oxoprolinase subunit A from Thermus thermophilus (strain ATCC 27634 / DSM 579 / HB8).